A 418-amino-acid chain; its full sequence is Serine/threonine transporter SstT (418 aa).

9 helical membrane-spanning segments follow: residues 16 to 36, 45 to 65, 83 to 103, 142 to 162, 192 to 212, 218 to 238, 289 to 309, 317 to 337, and 364 to 384; these read SLVS…TLIP, LGTL…LLLV, LLIL…VASF, ALLE…GLSL, PLGI…SALL, LIVL…LIVF, VSIP…ITVL, LGIS…TISA, and VAMQ…SAET.

This sequence belongs to the dicarboxylate/amino acid:cation symporter (DAACS) (TC 2.A.23) family.

It localises to the cell inner membrane. The catalysed reaction is L-serine(in) + Na(+)(in) = L-serine(out) + Na(+)(out). It catalyses the reaction L-threonine(in) + Na(+)(in) = L-threonine(out) + Na(+)(out). Involved in the import of serine and threonine into the cell, with the concomitant import of sodium (symport system). This is Serine/threonine transporter SstT from Tolumonas auensis (strain DSM 9187 / NBRC 110442 / TA 4).